A 430-amino-acid polypeptide reads, in one-letter code: UDP-glucuronate 4-epimerase 3 (430 aa).

2 helical membrane passes run 29-49 (SVAK…IFFY) and 90-110 (GFSV…SAAL). 92–123 (SVLVTGAAGFVGTHVSAALKRRGDGVLGLDNF) contributes to the NAD(+) binding site. Tyrosine 242 functions as the Proton acceptor in the catalytic mechanism.

Belongs to the NAD(P)-dependent epimerase/dehydratase family. In terms of assembly, homodimer. In terms of tissue distribution, in roots, leaves, siliques, flowers, pollen and stems.

It is found in the golgi apparatus. It localises to the golgi stack membrane. The enzyme catalyses UDP-alpha-D-glucuronate = UDP-alpha-D-galacturonate. In terms of biological role, involved in the synthesis of the negatively charged monosaccharide that forms the backbone of pectic cell wall components. This chain is UDP-glucuronate 4-epimerase 3 (GAE3), found in Arabidopsis thaliana (Mouse-ear cress).